Reading from the N-terminus, the 268-residue chain is Secreted RxLR effector protein 5 (268 aa).

The first 21 residues, 1-21 (MRGAFYMAITLFLARSRSATA), serve as a signal peptide directing secretion. The short motif at 48–63 (RYLRDGLALSAANEER) is the RxLR-dEER element. N-linked (GlcNAc...) asparagine glycosylation is present at N104.

It belongs to the RxLR effector family.

It localises to the secreted. The protein localises to the host nucleus. Functionally, effector that acts as a broad suppressor of cell death to interrupt plant immunity. Inhibits cell death induced by cell death-inducing proteins, including the PAMP elicitor INF1 from P.infestans. In Plasmopara viticola (Downy mildew of grapevine), this protein is Secreted RxLR effector protein 5.